The primary structure comprises 250 residues: MRDEIATAVFFVTRLVKKHEKLSTQQIETFALKLMTILFEKYRGHWHPDCPSKGQAFRCIRINNNENKDPVLERACAESNVNFFHLGLPKEMTIWVDPYEVCCRYGEKKHPFTIASFKGRWENWELAQHVSCAVNRATGDCSSGTSSDEESCSREAQIIPKVNNPKSVYQVENFKQSLQPWFCLPRRKHLADGRGFLPGAACHPVPKSSKWCRPASRRVDRYHWVNAQLFSGQTAPGEPGEEALSSLKQK.

It belongs to the BTG family. As to quaternary structure, interacts with CNOT7 and EIF4E. Interacts with CNOT8. As to expression, expressed in oocytes. Expressed in testis and in olfactory epithelium.

In terms of biological role, adapter protein that bridges CNOT7, a catalytic subunit of the CCR4-NOT complex, to EIF4E, and facilitates maternal mRNAs decay during the maturation of oocytes and in the fertilized egg. It is therefore required for the maternal-zygotic transition (MZT), zygotic cleavage and initiation of embryonic development. In Mus musculus (Mouse), this protein is Protein BTG4 (Btg4).